Here is a 255-residue protein sequence, read N- to C-terminus: uncharacterized protein (255 aa).

2 consecutive transmembrane segments (helical) span residues 99-119 (ISLI…ITSF) and 146-166 (YIGS…ILFL).

It localises to the mitochondrion membrane. This is an uncharacterized protein from Schizosaccharomyces pombe (strain 972 / ATCC 24843) (Fission yeast).